Consider the following 865-residue polypeptide: MAIQKKHGKGRLDKWYKLAKEKGYRARAAFKLIQLNKKYGFLEKSKVLLDLCAAPGSWCQVAAEVMPVSSLIVGVDLAPIKPIPKVITFQSDITTEKCRATIRQHLKTWKADTVLHDGAPNVGTAWVQDSFNQAELTLQAMKLATEFLVEGGTFVTKVFRSKDYNSMLWVFNQLFKKVEATKPPSSRNVSAEIFVVCRGFKAPKRIDPKFLDPRAVFAELADPTPNNEAKVYKPEIKKRKRDGYEEGDYTQYKELPAYEFIQSTDPIAILGSTNRLSLEQSKNGDVALAVLEKLPETTDEIRTCCADLKVLGRKEFKLLLKWRLAVREKLGFPTKKSVKKEEEAAAAVAAAEEVAKIESMDEEMRIQHELEKLKERNSTKKKRERRKENERKQKDIVRMQMHMVAPMDIGVEQAGPEGEDAMFALRAVEKGDVMRRLAKGKMVVASEADAKKDRDSGIGSSGETDDESDEELDRLETELDDMYDQFRERKAASDAKYRAKKARQARNGDGDEEWEGVSDNEKADEISDDSELEEESSGDSDDEDDTAPRKSLLTDLDTTPSDNSGLSKRARAFFNQDIFKELDGDMDEPMDEELRAALAGEDEDADMEDTVSKADSKKTKEKTADKKAAKKAKKAAQKAQQVKDDDSDDESDGGFEVVKSGKEDDWEDEDKRTKDGRLDIDIITAEAMTLAHQLATGQKSSHDVIDDGFNKHAFKDREGLPEWFLDDETKHDKPQKPITKAAAAAIKEKMRAFNARPIKKVREAKGRKKMKAAQRLEKLKKKSDLLVNEEGMTEKEKAESIAKLLRKATKKKPKQAVKVVVAKGANRGIKGRPQGIKGRYKIVDPRMKKEMRALKRVAQKAKKRR.

Residues glycine 56, tryptophan 58, aspartate 76, aspartate 92, and aspartate 117 each contribute to the S-adenosyl-L-methionine site. The Proton acceptor role is filled by lysine 157. 2 coiled-coil regions span residues glutamate 358 to glutamine 400 and glycine 462 to alanine 492. Disordered stretches follow at residues leucine 370 to isoleucine 396 and valine 443 to glycine 676. Over residues arginine 386–isoleucine 396 the composition is skewed to basic and acidic residues. Over residues glutamate 463–tyrosine 483 the composition is skewed to acidic residues. Residues aspartate 484–tyrosine 497 show a composition bias toward basic and acidic residues. Over residues isoleucine 526–aspartate 545 the composition is skewed to acidic residues. Over residues leucine 556–leucine 566 the composition is skewed to polar residues. The segment covering glycine 600 to aspartate 609 has biased composition (acidic residues). Composition is skewed to basic and acidic residues over residues threonine 610–lysine 627 and lysine 659–glycine 676. Residues arginine 762–glutamate 789 adopt a coiled-coil conformation.

Belongs to the class I-like SAM-binding methyltransferase superfamily. RNA methyltransferase RlmE family. SPB1 subfamily. As to quaternary structure, component of the nucleolar and nucleoplasmic pre-60S ribosomal particle.

It is found in the nucleus. It localises to the nucleolus. The catalysed reaction is a ribonucleotide in rRNA + S-adenosyl-L-methionine = a 2'-O-methylribonucleotide in rRNA + S-adenosyl-L-homocysteine + H(+). Its function is as follows. Required for proper assembly of pre-ribosomal particles during the biogenesis of the 60S ribosomal subunit. The polypeptide is AdoMet-dependent rRNA methyltransferase SPB1 (Pyricularia oryzae (strain 70-15 / ATCC MYA-4617 / FGSC 8958) (Rice blast fungus)).